Here is a 152-residue protein sequence, read N- to C-terminus: Large ribosomal subunit protein bL9 (152 aa).

Belongs to the bacterial ribosomal protein bL9 family.

In terms of biological role, binds to the 23S rRNA. The sequence is that of Large ribosomal subunit protein bL9 from Acaryochloris marina (strain MBIC 11017).